The following is a 152-amino-acid chain: Biogenesis of lysosome-related organelles complex 1 subunit 1 (152 aa).

Belongs to the BLOC1S1 family. In terms of assembly, component of the biogenesis of lysosome-related organelles complex-1 (BLOC-1). Interacts with BLOS2 and SNX1. Expressed in the whole plant (at protein level).

It localises to the cytoplasm. It is found in the endosome. Component of the biogenesis of lysosome-related organelles complex-1 (BLOC-1), a complex that mediates the vacuolar degradative transport via the intracellular vesicle trafficking from the endosome to the vacuole. Probably regulates the PIN1 and PIN2 homeostasis through its interaction with SNX1. In Arabidopsis thaliana (Mouse-ear cress), this protein is Biogenesis of lysosome-related organelles complex 1 subunit 1 (BLOS1).